The following is a 624-amino-acid chain: Exocyst complex component EXO70B1 (624 aa).

The disordered stretch occupies residues 148–176 (FGLNPQGDAGAMNHRFDSEEEEDDDRDFN).

It belongs to the EXO70 family. As to quaternary structure, interacts with EXO70B2, SEC5A and EXO84B. Binds to PUB18. Binds directly to B1L at the plasma membrane and in small vesicles. Target of the E3 ubiquitin-protein ligase PUB18 that mediates its ubiquitination and degradation via the 26S proteasome.

It localises to the cytoplasmic vesicle. Its subcellular location is the phagosome. The protein localises to the endomembrane system. It is found in the cell membrane. The protein resides in the vesicle. Functionally, component of an exocyst subcomplex specifically involved in autophagy-related, Golgi-independent membrane traffic to the vacuole. Regulates autophagosome formation and autophagy-related Golgi-independent import into the vacuole. Positive regulator of both abscisic acid (ABA)-promoted and mannitol (drought)-promoted stomatal closure. Involved in the regulation of lateral root formation. The chain is Exocyst complex component EXO70B1 from Arabidopsis thaliana (Mouse-ear cress).